Here is a 524-residue protein sequence, read N- to C-terminus: Ankyrin repeat-containing protein At5g02620 (524 aa).

8 ANK repeats span residues 16-45 (RDDT…GVEL), 55-84 (SGET…SVLA), 90-119 (NGFD…ELSF), 124-153 (SKTT…DLAA), 158-187 (NGKT…GMVT), 192-222 (KGQT…LINS), 226-255 (KGNT…VSRV), and 260-289 (SGET…QNAR). 4 helical membrane passes run 349–369 (AINS…AAIF), 399–419 (FLIF…VVVV), 441–461 (LMWM…FVVV), and 472–492 (VTAI…YWVI). Phosphoserine is present on Ser508.

The protein resides in the membrane. This Arabidopsis thaliana (Mouse-ear cress) protein is Ankyrin repeat-containing protein At5g02620.